The chain runs to 380 residues: Alanine racemase (380 aa).

The Proton acceptor; specific for D-alanine role is filled by Lys-41. Lys-41 bears the N6-(pyridoxal phosphate)lysine mark. Substrate is bound at residue Arg-141. Residue Tyr-271 is the Proton acceptor; specific for L-alanine of the active site. Met-318 is a substrate binding site.

Belongs to the alanine racemase family. Pyridoxal 5'-phosphate is required as a cofactor.

The catalysed reaction is L-alanine = D-alanine. It participates in amino-acid biosynthesis; D-alanine biosynthesis; D-alanine from L-alanine: step 1/1. Functionally, catalyzes the interconversion of L-alanine and D-alanine. May also act on other amino acids. The polypeptide is Alanine racemase (alr) (Latilactobacillus sakei subsp. sakei (strain 23K) (Lactobacillus sakei subsp. sakei)).